Here is a 569-residue protein sequence, read N- to C-terminus: Urease subunit alpha (569 aa).

The region spanning 131–569 (GSIDTHIHFI…VPMAQRYFLL (439 aa)) is the Urease domain. Ni(2+) is bound by residues histidine 136, histidine 138, and lysine 219. Lysine 219 carries the post-translational modification N6-carboxylysine. Residue histidine 221 coordinates substrate. Ni(2+)-binding residues include histidine 248 and histidine 274. The Proton donor role is filled by histidine 322. Residue aspartate 362 coordinates Ni(2+).

This sequence belongs to the metallo-dependent hydrolases superfamily. Urease alpha subunit family. As to quaternary structure, heterotrimer of UreA (gamma), UreB (beta) and UreC (alpha) subunits. Three heterotrimers associate to form the active enzyme. The cofactor is Ni cation. Post-translationally, carboxylation allows a single lysine to coordinate two nickel ions.

It localises to the cytoplasm. It carries out the reaction urea + 2 H2O + H(+) = hydrogencarbonate + 2 NH4(+). It participates in nitrogen metabolism; urea degradation; CO(2) and NH(3) from urea (urease route): step 1/1. This Prochlorococcus marinus (strain AS9601) protein is Urease subunit alpha.